A 363-amino-acid chain; its full sequence is Putative C-&gt;U-editing enzyme APOBEC-4 (363 aa).

The region spanning 61–177 (PQTKHLTFYE…AWNREALRSL (117 aa)) is the CMP/dCMP-type deaminase domain. H93 contributes to the Zn(2+) binding site. E95 acts as the Proton donor in catalysis. Zn(2+) contacts are provided by C127 and C134.

Belongs to the cytidine and deoxycytidylate deaminase family. Requires Zn(2+) as cofactor.

Putative C to U editing enzyme whose physiological substrate is not yet known. This chain is Putative C-&gt;U-editing enzyme APOBEC-4 (APOBEC4), found in Macaca fascicularis (Crab-eating macaque).